We begin with the raw amino-acid sequence, 431 residues long: uncharacterized protein (431 aa).

2 4Fe-4S ferredoxin-type domains span residues 336–367 (VRPV…NGLD) and 362–391 (IDNG…MDTG).

This is an uncharacterized protein from Methanothermobacter thermautotrophicus (strain ATCC 29096 / DSM 1053 / JCM 10044 / NBRC 100330 / Delta H) (Methanobacterium thermoautotrophicum).